Here is a 192-residue protein sequence, read N- to C-terminus: Ion-translocating oxidoreductase complex subunit B (192 aa).

Residues 1 to 26 form a hydrophobic region; sequence MNAIWIAVAAVSLLGLAFGAILGYAS. Positions 32-91 constitute a 4Fe-4S domain; the sequence is EDDPVVEKIDEILPQSQCGQCGYPGCRPYAEAISCNGEKINRCAPGGEAVMLKIAELLNV. The [4Fe-4S] cluster site is built by cysteine 49, cysteine 52, cysteine 57, cysteine 74, cysteine 117, cysteine 120, cysteine 123, cysteine 127, cysteine 147, cysteine 150, cysteine 153, and cysteine 157. 2 consecutive 4Fe-4S ferredoxin-type domains span residues 108 to 137 and 138 to 167; these read MVAV…GATR and AMHT…LQPV.

Belongs to the 4Fe4S bacterial-type ferredoxin family. RnfB subfamily. The complex is composed of six subunits: RsxA, RsxB, RsxC, RsxD, RsxE and RsxG. [4Fe-4S] cluster serves as cofactor.

The protein resides in the cell inner membrane. Functionally, part of a membrane-bound complex that couples electron transfer with translocation of ions across the membrane. Required to maintain the reduced state of SoxR. The sequence is that of Ion-translocating oxidoreductase complex subunit B from Escherichia coli O139:H28 (strain E24377A / ETEC).